The primary structure comprises 485 residues: Probable glycine dehydrogenase (decarboxylating) subunit 2 (485 aa).

The residue at position 273 (Lys-273) is an N6-(pyridoxal phosphate)lysine.

Belongs to the GcvP family. C-terminal subunit subfamily. As to quaternary structure, the glycine cleavage system is composed of four proteins: P, T, L and H. In this organism, the P 'protein' is a heterodimer of two subunits. It depends on pyridoxal 5'-phosphate as a cofactor.

It carries out the reaction N(6)-[(R)-lipoyl]-L-lysyl-[glycine-cleavage complex H protein] + glycine + H(+) = N(6)-[(R)-S(8)-aminomethyldihydrolipoyl]-L-lysyl-[glycine-cleavage complex H protein] + CO2. Its function is as follows. The glycine cleavage system catalyzes the degradation of glycine. The P protein binds the alpha-amino group of glycine through its pyridoxal phosphate cofactor; CO(2) is released and the remaining methylamine moiety is then transferred to the lipoamide cofactor of the H protein. The sequence is that of Probable glycine dehydrogenase (decarboxylating) subunit 2 from Oceanobacillus iheyensis (strain DSM 14371 / CIP 107618 / JCM 11309 / KCTC 3954 / HTE831).